The primary structure comprises 159 residues: NADH-quinone oxidoreductase subunit B (159 aa).

Positions 36, 37, 102, and 132 each coordinate [4Fe-4S] cluster.

This sequence belongs to the complex I 20 kDa subunit family. In terms of assembly, NDH-1 is composed of 14 different subunits. Subunits NuoB, C, D, E, F, and G constitute the peripheral sector of the complex. [4Fe-4S] cluster serves as cofactor.

It is found in the cell inner membrane. The enzyme catalyses a quinone + NADH + 5 H(+)(in) = a quinol + NAD(+) + 4 H(+)(out). NDH-1 shuttles electrons from NADH, via FMN and iron-sulfur (Fe-S) centers, to quinones in the respiratory chain. Couples the redox reaction to proton translocation (for every two electrons transferred, four hydrogen ions are translocated across the cytoplasmic membrane), and thus conserves the redox energy in a proton gradient. The polypeptide is NADH-quinone oxidoreductase subunit B (Albidiferax ferrireducens (strain ATCC BAA-621 / DSM 15236 / T118) (Rhodoferax ferrireducens)).